The chain runs to 227 residues: Claudin-15 (227 aa).

Residue methionine 1 is a topological domain, cytoplasmic. Residues 2-24 form a helical membrane-spanning segment; the sequence is SIAVETFGFFMSALGLLMLGVTL. The Extracellular segment spans residues 25–74; it reads PNSYWRVSTVHGNVITTNTIFENLWYSCATDSLGVSNCWDFPSMLALSGY. A disulfide bond links cysteine 52 and cysteine 62. A helical transmembrane segment spans residues 75-99; sequence VQGCRALMITAILLGFLGLFLGMVG. The Cytoplasmic segment spans residues 100-115; that stretch reads LRCTNVGNIDLSRKAK. Serine 111 is subject to Phosphoserine. The helical transmembrane segment at 116 to 140 threads the bilayer; the sequence is LLAIAGAFHILAGACGMVAISWYAV. The Extracellular portion of the chain corresponds to 141-159; it reads NITTDFFNPLYVGTKYELG. Residues 146–147 are important for the formation of tight-junction strand-like structures; the sequence is FF. The chain crosses the membrane as a helical span at residues 160–182; sequence SALYLGWSASLLSILGGICVFST. Topologically, residues 183–227 are cytoplasmic; that stretch reads CCCDSKEDPATRVGLPYKPSTVVTARATSDESDVSFGKYGKNAYV. Residues serine 211, serine 214, and serine 217 each carry the phosphoserine modification.

This sequence belongs to the claudin family. As to quaternary structure, can form homo- and heteropolymeric tight junction strands. Palmitoylated. Detected in kidney, jejunum and colon (at protein level).

The protein localises to the cell junction. It localises to the tight junction. Its subcellular location is the cell membrane. It catalyses the reaction Na(+)(in) = Na(+)(out). The catalysed reaction is K(+)(in) = K(+)(out). The enzyme catalyses Cs(+)(in) = Cs(+)(out). It carries out the reaction Rb(+)(in) = Rb(+)(out). It catalyses the reaction Li(+)(in) = Li(+)(out). The catalysed reaction is NH4(+)(in) = NH4(+)(out). The enzyme catalyses methylamine(out) = methylamine(in). It carries out the reaction H2O(in) = H2O(out). Functionally, forms paracellular channels: polymerizes in tight junction strands with cation- and water-selective channels through the strands, conveying epithelial permeability in a process known as paracellular tight junction permeability. In intestinal epithelium, allows for sodium and water fluxes from the peritoneal side to the lumen of the intestine to regulate nutrient absorption and intestinal morphogenesis. The chain is Claudin-15 from Rattus norvegicus (Rat).